The chain runs to 504 residues: UDP-N-acetylmuramoylalanine--D-glutamate ligase (504 aa).

Residue Gly-129–Thr-135 coordinates ATP.

The protein belongs to the MurCDEF family.

It localises to the cytoplasm. It catalyses the reaction UDP-N-acetyl-alpha-D-muramoyl-L-alanine + D-glutamate + ATP = UDP-N-acetyl-alpha-D-muramoyl-L-alanyl-D-glutamate + ADP + phosphate + H(+). It functions in the pathway cell wall biogenesis; peptidoglycan biosynthesis. Functionally, cell wall formation. Catalyzes the addition of glutamate to the nucleotide precursor UDP-N-acetylmuramoyl-L-alanine (UMA). The sequence is that of UDP-N-acetylmuramoylalanine--D-glutamate ligase from Burkholderia mallei (strain ATCC 23344).